A 123-amino-acid polypeptide reads, in one-letter code: Large ribosomal subunit protein mL52 (123 aa).

The N-terminal 23 residues, 1–23, are a transit peptide targeting the mitochondrion; that stretch reads MAALGTVLFTGVRRLHCSVAAWA. The segment covering 99 to 109 has biased composition (basic and acidic residues); the sequence is QEEQRKQENAL. A disordered region spans residues 99–123; it reads QEEQRKQENALKPKGASLKSPLPSQ.

It belongs to the mitochondrion-specific ribosomal protein mL52 family. In terms of assembly, component of the mitochondrial large ribosomal subunit (mt-LSU). Mature mammalian 55S mitochondrial ribosomes consist of a small (28S) and a large (39S) subunit. The 28S small subunit contains a 12S ribosomal RNA (12S mt-rRNA) and 30 different proteins. The 39S large subunit contains a 16S rRNA (16S mt-rRNA), a copy of mitochondrial valine transfer RNA (mt-tRNA(Val)), which plays an integral structural role, and 52 different proteins. mL52 connects the central protuberance to the body of the ribosome.

It is found in the mitochondrion. This chain is Large ribosomal subunit protein mL52 (MRPL52), found in Homo sapiens (Human).